The primary structure comprises 288 residues: ATP synthase gamma chain (288 aa).

This sequence belongs to the ATPase gamma chain family. F-type ATPases have 2 components, CF(1) - the catalytic core - and CF(0) - the membrane proton channel. CF(1) has five subunits: alpha(3), beta(3), gamma(1), delta(1), epsilon(1). CF(0) has three main subunits: a, b and c.

The protein localises to the cell membrane. Functionally, produces ATP from ADP in the presence of a proton gradient across the membrane. The gamma chain is believed to be important in regulating ATPase activity and the flow of protons through the CF(0) complex. This is ATP synthase gamma chain from Staphylococcus aureus (strain Mu3 / ATCC 700698).